The primary structure comprises 477 residues: E3 ubiquitin-protein ligase TRIM17 (477 aa).

The segment at C16–R66 adopts an RING-type zinc-finger fold. The segment at H94 to L135 adopts a B box-type zinc-finger fold. The Zn(2+) site is built by C99, H102, C121, and H127. Positions L135 to L225 form a coiled coil. The 200-residue stretch at A276 to V475 folds into the B30.2/SPRY domain.

Belongs to the TRIM/RBCC family. Interacts (via coiled coil) with TRIM44 (via coiled coil). Interacts with TRIM28; this interaction prevents TRIM28 activity on BCL2A1. Interacts with TRIM41; this interaction prevents TRIM41 activity on ZSCAN2. Interacts with BECN1. Interacts with NFATC3 and NFATC4; these interactions prevent NFATC3 and NFATC4 nuclear localization. Auto-ubiquitinated. In terms of tissue distribution, expressed almost exclusively in the testis.

It is found in the cytoplasm. The protein localises to the lysosome. It carries out the reaction S-ubiquitinyl-[E2 ubiquitin-conjugating enzyme]-L-cysteine + [acceptor protein]-L-lysine = [E2 ubiquitin-conjugating enzyme]-L-cysteine + N(6)-ubiquitinyl-[acceptor protein]-L-lysine.. The protein operates within protein modification; protein ubiquitination. E3 ubiquitin ligase that plays important roles in the regulation of neuronal apoptosis, selective autophagy or cell proliferation. Stimulates the degradation of kinetochore ZW10 interacting protein ZWINT in a proteasome-dependent manner, leading to negative regulation of cell proliferation. Inhibits autophagic degradation of diverse known targets while contributing to autophagy of midbodies. Autophagy-inhibitory activity involves MCL1, which TRIM17 assembles into complexes with the key autophagy regulator BECN1. Controls neuronal apoptosis by mediating ubiquitination and degradation of MCL1 to initiate neuronal death. In addition, regulates NFAT transcription factors NFATC3 and NFATC4 activities by preventing their nuclear localization, thus inhibiting their transcriptional activities. Decreases TRIM41-mediated degradation of ZSCAN2 thereby stimulating alpha-synuclein/SNCA transcription in neuronal cells. Prevents the E3 ubiquitin-ligase activity of TRIM28 and its interaction with anti-apoptotic BCL2A1, blocking TRIM28 from ubiquitinating BCL2A1. In Rattus norvegicus (Rat), this protein is E3 ubiquitin-protein ligase TRIM17 (Trim17).